A 156-amino-acid chain; its full sequence is MGRSISVSFGLLVVFLSLSGIGADFDCPSGWSAYDQHCYQAVDEPKSWADAEKFCTEQANGGHLVSIDSKKEANFVAELVSQNIKETRRTDFVWIGLRAEDKRQHCSSEWSDGSSINYQNWIEAESKKCLGLEKQTRYRKWVNLNCGQPYRFTCEI.

The first 23 residues, 1–23, serve as a signal peptide directing secretion; that stretch reads MGRSISVSFGLLVVFLSLSGIGA. Disulfide bonds link Cys27/Cys38, Cys55/Cys154, and Cys129/Cys146. Residues 34 to 155 form the C-type lectin domain; sequence YDQHCYQAVD…CGQPYRFTCE (122 aa).

Belongs to the snaclec family. In terms of assembly, heterodimer; disulfide-linked. As to expression, expressed by the venom gland.

The protein resides in the secreted. In terms of biological role, interferes with one step of hemostasis (modulation of platelet aggregation, or coagulation cascade, for example). This Macrovipera lebetinus (Levantine viper) protein is Snaclec A10.